Reading from the N-terminus, the 227-residue chain is A-type potassium channel modulatory protein KCNIP1 (227 aa).

The 57-residue stretch at 38–94 (LEMTMVCHRPEGLEQLEAQTNFTKRELQVLYRGFKNECPSGVVNEDTFKQIYAQFFP) folds into the EF-hand 1; degenerate domain. EF-hand domains lie at 97-132 (DASTYAHYLFNAFDTTQTGSVKFEDFVTALSILLRG), 133-168 (TVHEKLRWTFNLYDINKDGYINKEEMMDIVKAIYDM), and 181-216 (TPRQHVDVFFQKMDKNKDGIVTLDEFLESCQEDDNI). Ca(2+) is bound by residues Asp146, Asn148, Asp150, Tyr152, Glu157, Asp194, Asn196, Asp198, and Glu205. The interaction with KCND2 stretch occupies residues 214–227 (DNIMRSLQLFQNVM).

The protein belongs to the recoverin family. Component of heteromultimeric potassium channels. Identified in potassium channel complexes containing KCND1, KCND2, KCND3, KCNIP1, KCNIP2, KCNIP3, KCNIP4, DPP6 and DPP10. Part of a heterooctamer composed of the tetrameric channel and four KCNIP1 chains. Probably part of a complex consisting of KCNIP1, KCNIP2 isoform 3 and KCND2. Self-associates to form homodimers and homotetramers. Interacts with KCNIP2 isoform 3 in a calcium-dependent manner. Interacts with Naja atra venom CTX3. Interacts with KCND2; this interaction mediates the capture of both the N- and C-terminus of KCND2, thus preventing KCND2 N-type inactivation and modulates the channel gating kinetics. Interacts with KCND3; each KCNIP1 monomer interacts with two adjacent KCND3 subunits, through both the N-terminal inactivation ball of a KCND3 subunit and a C-terminal helix from the adjacent KCND3 subunit, clamping them together; this interaction stabilizes the tetrameric form and modulates the channel gating kinetics namely channel activation and inactivation kinetics and rate of recovery from inactivation. Isoform 1 and isoform 2 are expressed in brain and kidney. Isoform 1 is also expressed in liver, pancreas, skeletal muscle, small intestine and testis. Isoform 2 is also expressed in lung, pancreas, leukocytes, prostate and thymus.

It localises to the cell membrane. The protein resides in the cytoplasm. It is found in the cell projection. Its subcellular location is the dendrite. Regulatory subunit of Kv4/D (Shal)-type voltage-gated rapidly inactivating A-type potassium channels. Regulates channel density, inactivation kinetics and rate of recovery from inactivation in a calcium-dependent and isoform-specific manner. In vitro, modulates KCND1/Kv4.1 and KCND2/Kv4.2 currents. Increases the presence of KCND2 at the cell surface. The polypeptide is A-type potassium channel modulatory protein KCNIP1 (Homo sapiens (Human)).